A 368-amino-acid polypeptide reads, in one-letter code: Aminomethyltransferase (368 aa).

The protein belongs to the GcvT family. The glycine cleavage system is composed of four proteins: P, T, L and H.

The enzyme catalyses N(6)-[(R)-S(8)-aminomethyldihydrolipoyl]-L-lysyl-[protein] + (6S)-5,6,7,8-tetrahydrofolate = N(6)-[(R)-dihydrolipoyl]-L-lysyl-[protein] + (6R)-5,10-methylene-5,6,7,8-tetrahydrofolate + NH4(+). The glycine cleavage system catalyzes the degradation of glycine. The protein is Aminomethyltransferase of Xylella fastidiosa (strain M12).